A 100-amino-acid chain; its full sequence is Integration host factor subunit alpha (100 aa).

The disordered stretch occupies residues 53–72 (FDLRDKKQRPGRNPKTGEEI).

This sequence belongs to the bacterial histone-like protein family. Heterodimer of an alpha and a beta chain.

This protein is one of the two subunits of integration host factor, a specific DNA-binding protein that functions in genetic recombination as well as in transcriptional and translational control. This is Integration host factor subunit alpha from Marinobacter nauticus (strain ATCC 700491 / DSM 11845 / VT8) (Marinobacter aquaeolei).